The chain runs to 405 residues: NADH-quinone oxidoreductase subunit D (405 aa).

The protein belongs to the complex I 49 kDa subunit family. In terms of assembly, NDH-1 is composed of 14 different subunits. Subunits NuoB, C, D, E, F, and G constitute the peripheral sector of the complex.

The protein resides in the cell inner membrane. It catalyses the reaction a quinone + NADH + 5 H(+)(in) = a quinol + NAD(+) + 4 H(+)(out). Functionally, NDH-1 shuttles electrons from NADH, via FMN and iron-sulfur (Fe-S) centers, to quinones in the respiratory chain. The immediate electron acceptor for the enzyme in this species is believed to be ubiquinone. Couples the redox reaction to proton translocation (for every two electrons transferred, four hydrogen ions are translocated across the cytoplasmic membrane), and thus conserves the redox energy in a proton gradient. This Sphingopyxis alaskensis (strain DSM 13593 / LMG 18877 / RB2256) (Sphingomonas alaskensis) protein is NADH-quinone oxidoreductase subunit D.